Reading from the N-terminus, the 207-residue chain is Holliday junction branch migration complex subunit RuvA (207 aa).

Residues 1-64 form a domain I region; sequence MIGRLRGNLL…EDAQLLYGFN (64 aa). Residues 65–143 form a domain II region; it reads TKNERALFRE…GWGAGDLFTP (79 aa). Residues 144 to 158 form a flexible linker region; it reads ATDAAPMDDGSEFIT. A domain III region spans residues 159–207; the sequence is SPQSAVDEAVSALIALGYKPQQASKTVSQVAKPDMTSEVLIRESLKSMI.

Belongs to the RuvA family. As to quaternary structure, homotetramer. Forms an RuvA(8)-RuvB(12)-Holliday junction (HJ) complex. HJ DNA is sandwiched between 2 RuvA tetramers; dsDNA enters through RuvA and exits via RuvB. An RuvB hexamer assembles on each DNA strand where it exits the tetramer. Each RuvB hexamer is contacted by two RuvA subunits (via domain III) on 2 adjacent RuvB subunits; this complex drives branch migration. In the full resolvosome a probable DNA-RuvA(4)-RuvB(12)-RuvC(2) complex forms which resolves the HJ.

Its subcellular location is the cytoplasm. The RuvA-RuvB-RuvC complex processes Holliday junction (HJ) DNA during genetic recombination and DNA repair, while the RuvA-RuvB complex plays an important role in the rescue of blocked DNA replication forks via replication fork reversal (RFR). RuvA specifically binds to HJ cruciform DNA, conferring on it an open structure. The RuvB hexamer acts as an ATP-dependent pump, pulling dsDNA into and through the RuvAB complex. HJ branch migration allows RuvC to scan DNA until it finds its consensus sequence, where it cleaves and resolves the cruciform DNA. This chain is Holliday junction branch migration complex subunit RuvA, found in Aliivibrio fischeri (strain MJ11) (Vibrio fischeri).